Consider the following 74-residue polypeptide: Exodeoxyribonuclease 7 small subunit (74 aa).

The protein belongs to the XseB family. In terms of assembly, heterooligomer composed of large and small subunits.

Its subcellular location is the cytoplasm. The enzyme catalyses Exonucleolytic cleavage in either 5'- to 3'- or 3'- to 5'-direction to yield nucleoside 5'-phosphates.. Functionally, bidirectionally degrades single-stranded DNA into large acid-insoluble oligonucleotides, which are then degraded further into small acid-soluble oligonucleotides. This Clostridium beijerinckii (strain ATCC 51743 / NCIMB 8052) (Clostridium acetobutylicum) protein is Exodeoxyribonuclease 7 small subunit.